The sequence spans 273 residues: MVVALVGSAIVDLHSRPPWSNNAVRRLGVALRDGVDPPVDCPSYAEVMLWHADLAAEVQDRIEGRSWSASELLVTSRAKSQDTLLAKLRRRPYLQLNTIQDIAGVRIDADLLLGEQTRLAREIADHFGADQPAIHDLRDHPHAGYRAVHVWLRLPAGRVEIQIRTILQSLWANFYELLADAYGRGIRYDERPEQLAAGVVPAQLQELVGVMQDASADLAMHEAEWQHCAEIEYPGQRAMALGEASKNKATVLATTKFRLERAINEAESAGGGG.

This is an uncharacterized protein from Mycobacterium bovis (strain ATCC BAA-935 / AF2122/97).